The chain runs to 547 residues: MFPGAWLCWVSLLLLARLTQPCPVGCDCFGREVFCSDEQLADIPPDIPPHITDIVFVETAFTTVRTRAFSGSPNLTKVVFLNTQVRHLEPDAFGGLPRLQDLEITGSPVSNLSAHIFSNLSSLEKLTLDFDRLAGLPEDLFCHMDILESLQLQGNQLRTLPGRLFQSLRDLRTLNLAQNLLTQLPKGAFQSLTGLQMLKLSNNMLARLPEGALGSLSSLQELFLDGNAITELSPHLFSQLFSLEMLWLQHNAICHLPVSLFSSLHNLTFLSLKDNALRTLPEGLFAHNQGLLHLSLSYNQLETIPEGAFTNLSRLVSLTLSHNAITDLPEHVFRNLEQLVKLSLDSNNLTALHPALFHNLSRLQLLNLSRNQLTTLPGGIFDTNYDLFNLALLGNPWQCDCHLSYLTSWLRLYNNQISNTHTFCAGPAYLKGQLVPNLKQEQLICPVNPGHLSFRALGLDEGEPAGSWDLTVEGRAAHSQCAYSNPEGTVLLACEESRCRWLNIQLSSRDGSDSAAMVYNSSQEWGLRSSCGLLRVTVSIEAPAAGP.

Residues 1-21 form the signal peptide; it reads MFPGAWLCWVSLLLLARLTQP. The LRRNT domain maps to 22–49; it reads CPVGCDCFGREVFCSDEQLADIPPDIPP. 3 N-linked (GlcNAc...) asparagine glycosylation sites follow: asparagine 74, asparagine 111, and asparagine 119. 12 LRR repeats span residues 98 to 119, 122 to 143, 146 to 167, 170 to 191, 194 to 215, 218 to 239, 242 to 263, 266 to 287, 290 to 311, 314 to 335, 338 to 359, and 362 to 383; these read RLQDLEITGSPVSNLSAHIFSN, SLEKLTLDFDRLAGLPEDLFCH, ILESLQLQGNQLRTLPGRLFQS, DLRTLNLAQNLLTQLPKGAFQS, GLQMLKLSNNMLARLPEGALGS, SLQELFLDGNAITELSPHLFSQ, SLEMLWLQHNAICHLPVSLFSS, NLTFLSLKDNALRTLPEGLFAH, GLLHLSLSYNQLETIPEGAFTN, RLVSLTLSHNAITDLPEHVFRN, QLVKLSLDSNNLTALHPALFHN, and RLQLLNLSRNQLTTLPGGIFDT. N-linked (GlcNAc...) asparagine glycans are attached at residues asparagine 266 and asparagine 311. Residues asparagine 348, asparagine 359, and asparagine 367 are each glycosylated (N-linked (GlcNAc...) asparagine). Residues 395–447 enclose the LRRCT domain; it reads NPWQCDCHLSYLTSWLRLYNNQISNTHTFCAGPAYLKGQLVPNLKQEQLICPV. Residue asparagine 520 is glycosylated (N-linked (GlcNAc...) asparagine).

As to quaternary structure, tetramer of two catalytic chains and two glycosylated inactive chains.

The protein localises to the secreted. The 83 kDa subunit binds and stabilizes the catalytic subunit at 37 degrees Celsius and keeps it in circulation. Under some circumstances it may be an allosteric modifier of the catalytic subunit. This is Carboxypeptidase N subunit 2 (Cpn2) from Mus musculus (Mouse).